A 667-amino-acid chain; its full sequence is UvrABC system protein B (667 aa).

A Helicase ATP-binding domain is found at 31–414 (KNFEAGAKAQ…EAEQTDIQVD (384 aa)). ATP is bound at residue 44-51 (GATGTGKT). A Beta-hairpin motif is present at residues 97–120 (YYDYYQPEAYVPSSDTYIEKDSSI). A Helicase C-terminal domain is found at 435-597 (QIDDLVGEIN…ITPKTIIKPI (163 aa)). Positions 630–665 (LEMVERLSEQMRLAAKKLDFEQAATLRDTILELKSE) constitute a UVR domain.

It belongs to the UvrB family. Forms a heterotetramer with UvrA during the search for lesions. Interacts with UvrC in an incision complex.

It is found in the cytoplasm. Functionally, the UvrABC repair system catalyzes the recognition and processing of DNA lesions. A damage recognition complex composed of 2 UvrA and 2 UvrB subunits scans DNA for abnormalities. Upon binding of the UvrA(2)B(2) complex to a putative damaged site, the DNA wraps around one UvrB monomer. DNA wrap is dependent on ATP binding by UvrB and probably causes local melting of the DNA helix, facilitating insertion of UvrB beta-hairpin between the DNA strands. Then UvrB probes one DNA strand for the presence of a lesion. If a lesion is found the UvrA subunits dissociate and the UvrB-DNA preincision complex is formed. This complex is subsequently bound by UvrC and the second UvrB is released. If no lesion is found, the DNA wraps around the other UvrB subunit that will check the other stand for damage. The polypeptide is UvrABC system protein B (Latilactobacillus sakei subsp. sakei (strain 23K) (Lactobacillus sakei subsp. sakei)).